The following is a 255-amino-acid chain: Zinc import ATP-binding protein ZnuC 1 (255 aa).

The 214-residue stretch at 7 to 220 (IRLQDVTVKI…PAFINLFGTQ (214 aa)) folds into the ABC transporter domain. 39 to 46 (GPNGAGKS) lines the ATP pocket. Residues 229–255 (HHHHDHHHHTDGTVAAGSECSHGDQHA) are disordered.

It belongs to the ABC transporter superfamily. Zinc importer (TC 3.A.1.15.5) family. The complex is composed of two ATP-binding proteins (ZnuC), two transmembrane proteins (ZnuB) and a solute-binding protein (ZnuA).

It localises to the cell inner membrane. The enzyme catalyses Zn(2+)(out) + ATP(in) + H2O(in) = Zn(2+)(in) + ADP(in) + phosphate(in) + H(+)(in). Its function is as follows. Part of the ABC transporter complex ZnuABC involved in zinc import. Responsible for energy coupling to the transport system. The chain is Zinc import ATP-binding protein ZnuC 1 from Hahella chejuensis (strain KCTC 2396).